The primary structure comprises 156 residues: Lipoprotein signal peptidase (156 aa).

Residues 62 to 82 (GNTVFMVLSAVIIAILSYTKI) traverse the membrane as a helical segment. Catalysis depends on residues D115 and D133. A helical transmembrane segment spans residues 126-146 (WPAFNLADLTITCGVIVFLAM).

It belongs to the peptidase A8 family.

The protein localises to the cell inner membrane. It catalyses the reaction Release of signal peptides from bacterial membrane prolipoproteins. Hydrolyzes -Xaa-Yaa-Zaa-|-(S,diacylglyceryl)Cys-, in which Xaa is hydrophobic (preferably Leu), and Yaa (Ala or Ser) and Zaa (Gly or Ala) have small, neutral side chains.. It participates in protein modification; lipoprotein biosynthesis (signal peptide cleavage). This protein specifically catalyzes the removal of signal peptides from prolipoproteins. This Anaplasma phagocytophilum (strain HZ) protein is Lipoprotein signal peptidase.